Here is a 217-residue protein sequence, read N- to C-terminus: Ribosome maturation factor RimM (217 aa).

Residues 115–186 (EDAWYDNQLV…TVTLTPPPGL (72 aa)) form the PRC barrel domain. The tract at residues 181–217 (TPPPGLFEDLPDDAPAAGDESEPVSPPVTAEETPGGE) is disordered.

This sequence belongs to the RimM family. Binds ribosomal protein uS19.

The protein localises to the cytoplasm. In terms of biological role, an accessory protein needed during the final step in the assembly of 30S ribosomal subunit, possibly for assembly of the head region. Essential for efficient processing of 16S rRNA. May be needed both before and after RbfA during the maturation of 16S rRNA. It has affinity for free ribosomal 30S subunits but not for 70S ribosomes. The polypeptide is Ribosome maturation factor RimM (Leifsonia xyli subsp. xyli (strain CTCB07)).